The primary structure comprises 1338 residues: Apoptotic chromatin condensation inducer in the nucleus (1338 aa).

The disordered stretch occupies residues 1–57; the sequence is MWGRKRPNSSGETRGILSGNRGVDYGSGRGQSGPFEGRWRKLPKMPEAVGTDPSTSR. Residues 72 to 106 form the SAP domain; the sequence is LQALRVTDLKAALEQRGLAKSGQKSALVKRLKGAL. Phosphoserine is present on residues Ser132, Ser166, Ser169, Ser208, Ser210, and Ser216. The tract at residues 155 to 866 is disordered; it reads EAREAAELEE…ATQKKPSISI (712 aa). Over residues 161–171 the composition is skewed to acidic residues; sequence ELEEASAESED. The segment covering 219–228 has biased composition (basic and acidic residues); it reads EKPRKGERRS. Ser242 is subject to Phosphoserine. A Phosphothreonine modification is found at Thr253. Lys267 is covalently cross-linked (Glycyl lysine isopeptide (Lys-Gly) (interchain with G-Cter in SUMO1)). Residues 269–290 show a composition bias toward acidic residues; sequence EEEEEEEEEEEDDDDEEEEEVD. The residue at position 295 (Ser295) is a Phosphoserine. A compositionally biased stretch (basic and acidic residues) spans 313-353; sequence ERTRAKPEKVVDEKPLNIRSQEKGELEKGGRVTRSQEEARR. Lys318 participates in a covalent cross-link: Glycyl lysine isopeptide (Lys-Gly) (interchain with G-Cter in SUMO2). Phosphoserine is present on residues Ser332 and Ser369. Lys378 participates in a covalent cross-link: Glycyl lysine isopeptide (Lys-Gly) (interchain with G-Cter in SUMO2). Phosphoserine is present on residues Ser387, Ser389, Ser391, and Ser413. Phosphothreonine is present on residues Thr417 and Thr423. A compositionally biased stretch (polar residues) spans 425-434; it reads EASSPPTHIQ. A phosphoserine mark is found at Ser454, Ser477, Ser479, Ser491, and Ser497. Positions 506 to 518 are enriched in polar residues; sequence QKSSLPECSTQKG. The span at 542-559 shows a compositional bias: basic and acidic residues; it reads ITEEPMKKQSLEQKEGRR. Ser561 is modified (phosphoserine). 2 stretches are compositionally biased toward low complexity: residues 573-603 and 646-662; these read SADSSSSRSSSPSSSSSPSRSPSPDSVASRP and RSASSSSRKSLSPGVSR. Lys654 carries the post-translational modification N6,N6,N6-trimethyllysine; by EHMT2; alternate. Lys654 is subject to N6,N6-dimethyllysine; by EHMT2; alternate. A phosphoserine mark is found at Ser655, Ser657, Ser710, and Ser729. A Glycyl lysine isopeptide (Lys-Gly) (interchain with G-Cter in SUMO2) cross-link involves residue Lys732. Polar residues predominate over residues 744-754; it reads TQPQTSETQIS. 2 stretches are compositionally biased toward basic and acidic residues: residues 757 to 767 and 798 to 815; these read LESERTHHTVE and NDERPEGGAEEEEKKESS. Phosphoserine occurs at positions 825 and 838. The segment covering 855-866 has biased composition (polar residues); sequence TAATQKKPSISI. At Lys861 the chain carries N6-acetyllysine; alternate. Lys861 is covalently cross-linked (Glycyl lysine isopeptide (Lys-Gly) (interchain with G-Cter in SUMO2); alternate). A Glycyl lysine isopeptide (Lys-Gly) (interchain with G-Cter in SUMO2) cross-link involves residue Lys879. A compositionally biased stretch (basic and acidic residues) spans 892–915; the sequence is ADDSRISEDETERNGDDGTHDKGL. The disordered stretch occupies residues 892 to 950; sequence ADDSRISEDETERNGDDGTHDKGLKICRTVTQVVPAEGQENGQREEEEEKEPEAELPAP. Residues Ser895 and Ser898 each carry the phosphoserine modification. Over residues 936–945 the composition is skewed to acidic residues; the sequence is EEEEEKEPEA. Lys969 participates in a covalent cross-link: Glycyl lysine isopeptide (Lys-Gly) (interchain with G-Cter in SUMO2). Thr975 is subject to Phosphothreonine. 3 positions are modified to phosphoserine: Ser986, Ser989, and Ser1003. Glycyl lysine isopeptide (Lys-Gly) (interchain with G-Cter in SUMO2) cross-links involve residues Lys1046 and Lys1106. Disordered stretches follow at residues 1104–1214 and 1226–1338; these read ETKA…DDLF and LPLT…GGRR. Residues 1115–1129 are compositionally biased toward pro residues; sequence PLHPPPPPPVQPPPH. The span at 1130 to 1174 shows a compositional bias: basic and acidic residues; it reads PRAEQREQERAVREQWAEREREMERRERTRSEREWDRDKVREGPR. The span at 1175–1192 shows a compositional bias: basic residues; sequence SRSRSRDRRRKERAKSKE. Residue Ser1179 is modified to Phosphoserine; by SRPK2 and PKB/AKT1. 2 stretches are compositionally biased toward basic and acidic residues: residues 1193–1214 and 1236–1317; these read KKSEKKEKAQEEPPAKLLDDLF and KEAE…DRRD. Residues 1209 to 1236 are sufficient for interaction with RNPS1 and SAP18 and formation of the ASAP complex; it reads LLDDLFRKTKAAPCIYWLPLTESQIVQK.

Found in a mRNA splicing-dependent exon junction complex (EJC). Component of the heterotrimeric ASAP (apoptosis- and splicing-associated protein) complexes consisting of RNPS1, SAP18 and different isoforms of ACIN1; the association of SAP18 seems to require a preformed RNPS1:ACIN1 complex. Interacts with API5. Interacts with SRPK2 in a phosphorylation-dependent manner. Post-translationally, undergoes proteolytic cleavage; the processed form is active, contrary to the uncleaved form. In terms of processing, phosphorylation on Ser-1179 by SRPK2 up-regulates its stimulatory effect on cyclin A1.

The protein resides in the nucleus. It localises to the nucleus speckle. The protein localises to the nucleoplasm. In terms of biological role, auxiliary component of the splicing-dependent multiprotein exon junction complex (EJC) deposited at splice junction on mRNAs. The EJC is a dynamic structure consisting of core proteins and several peripheral nuclear and cytoplasmic associated factors that join the complex only transiently either during EJC assembly or during subsequent mRNA metabolism. Component of the ASAP complexes which bind RNA in a sequence-independent manner and are proposed to be recruited to the EJC prior to or during the splicing process and to regulate specific excision of introns in specific transcription subsets; ACIN1 confers RNA-binding to the complex. The ASAP complex can inhibit RNA processing during in vitro splicing reactions. The ASAP complex promotes apoptosis and is disassembled after induction of apoptosis. Involved in the splicing modulation of BCL2L1/Bcl-X (and probably other apoptotic genes); specifically inhibits formation of proapoptotic isoforms such as Bcl-X(S); the activity is different from the established EJC assembly and function. Induces apoptotic chromatin condensation after activation by CASP3. Regulates cyclin A1, but not cyclin A2, expression in leukemia cells. The polypeptide is Apoptotic chromatin condensation inducer in the nucleus (Acin1) (Mus musculus (Mouse)).